We begin with the raw amino-acid sequence, 213 residues long: Protein FAM156A/FAM156B (213 aa).

Residue methionine 1 is modified to N-acetylmethionine. A disordered region spans residues 1–62 (MDPLQKRNPA…SQAVPLPEGL (62 aa)). The span at 8–37 (NPASPSKSSPMTAAETSQEGPAPSQPSYSE) shows a compositional bias: polar residues. Serine 114 is subject to Phosphoserine. The chain crosses the membrane as a helical span at residues 154–170 (WETLVQGLSGLTLSLGT). The interval 165-198 (TLSLGTNQPGPLPEAALQPQETEEKRQRERQQES) is disordered. A compositionally biased stretch (basic and acidic residues) spans 186 to 197 (TEEKRQRERQQE).

The protein resides in the membrane. This is Protein FAM156A/FAM156B (FAM156A) from Homo sapiens (Human).